The chain runs to 349 residues: CCN family member 2 (349 aa).

Positions 1–26 (MSATGLSPVRCAFVLLLALCSRPASG) are cleaved as a signal peptide. The region spanning 27 to 98 (QDCSGQCQCA…NRKIGVCTAK (72 aa)) is the IGFBP N-terminal domain. 6 disulfide bridges follow: Cys29–Cys54, Cys33–Cys56, Cys35–Cys57, Cys43–Cys60, Cys68–Cys82, and Cys74–Cys95. A VWFC domain is found at 101–167 (APCVFGGTVY…GKCCEEWVCD (67 aa)). The TSP type-1 domain occupies 198-243 (NCLVQTTEWSACSKTCGMGISTRVTNDNAFCRLEKQSRLCMVRPCE). The heparin-binding stretch occupies residues 247–349 (EENIKKGKKC…YYRKMYGDMA (103 aa)). Cystine bridges form between Cys256-Cys293, Cys273-Cys307, Cys284-Cys323, Cys287-Cys325, and Cys292-Cys329. Residues 256–330 (CIRTPKISKP…KTCACHYNCP (75 aa)) enclose the CTCK domain.

It belongs to the CCN family. Monomer. Interacts with TSKU.

Its subcellular location is the secreted. The protein resides in the extracellular space. The protein localises to the extracellular matrix. Functionally, major connective tissue mitoattractant secreted by vascular endothelial cells. Promotes proliferation and differentiation of chondrocytes. Is involved in the stimulation of osteoblast differentiation and has a critical role in osteogenesis. Mediates heparin- and divalent cation-dependent cell adhesion in many cell types including fibroblasts, myofibroblasts, endothelial and epithelial cells. Enhances fibroblast growth factor-induced DNA synthesis. This is CCN family member 2 (CCN2) from Sus scrofa (Pig).